The sequence spans 300 residues: NAD kinase (300 aa).

The active-site Proton acceptor is aspartate 75. NAD(+) contacts are provided by residues 75 to 76 (DG), 149 to 150 (ND), arginine 177, aspartate 179, 190 to 195 (TAYALS), alanine 214, and glutamine 248.

It belongs to the NAD kinase family. The cofactor is a divalent metal cation.

It localises to the cytoplasm. The catalysed reaction is NAD(+) + ATP = ADP + NADP(+) + H(+). Its function is as follows. Involved in the regulation of the intracellular balance of NAD and NADP, and is a key enzyme in the biosynthesis of NADP. Catalyzes specifically the phosphorylation on 2'-hydroxyl of the adenosine moiety of NAD to yield NADP. The chain is NAD kinase from Burkholderia ambifaria (strain MC40-6).